Consider the following 156-residue polypeptide: Small ribosomal subunit protein uS7c (156 aa).

It belongs to the universal ribosomal protein uS7 family. Part of the 30S ribosomal subunit.

The protein localises to the plastid. It is found in the chloroplast. One of the primary rRNA binding proteins, it binds directly to 16S rRNA where it nucleates assembly of the head domain of the 30S subunit. The polypeptide is Small ribosomal subunit protein uS7c (rps7) (Nephroselmis olivacea (Green alga)).